A 410-amino-acid polypeptide reads, in one-letter code: Subtilisin-like protease CPC735_003880 (410 aa).

The first 17 residues, 1 to 17 (MKLLKSSLLLLLPFVTA), serve as a signal peptide directing secretion. Positions 18–118 (NPIPSEDKDI…VTPDRKVYLA (101 aa)) are excised as a propeptide. The region spanning 31–118 (RYIVTLKDGI…VTPDRKVYLA (88 aa)) is the Inhibitor I9 domain. The Peptidase S8 domain maps to 127–410 (GYNLGHMSSK…IQEMNETVIA (284 aa)). Asp-159 (charge relay system) is an active-site residue. The N-linked (GlcNAc...) asparagine glycan is linked to Asn-182. His-191 serves as the catalytic Charge relay system. N-linked (GlcNAc...) asparagine glycans are attached at residues Asn-238, Asn-251, and Asn-338. Catalysis depends on Ser-347, which acts as the Charge relay system. N-linked (GlcNAc...) asparagine glycosylation is present at Asn-405.

Belongs to the peptidase S8 family.

It localises to the secreted. In terms of biological role, secreted subtilisin-like serine protease with keratinolytic activity that contributes to pathogenicity. This Coccidioides posadasii (strain C735) (Valley fever fungus) protein is Subtilisin-like protease CPC735_003880.